A 397-amino-acid chain; its full sequence is LIM/homeobox protein Lhx9 (397 aa).

LIM zinc-binding domains follow at residues 69–130 (ALCA…RFSV) and 131–193 (QRCA…LLQG). 3 disordered regions span residues 248 to 272 (ENEA…RMRT), 330 to 364 (ENGG…TLTD), and 378 to 397 (SNMD…TNLF). Residues 267–326 (TKRMRTSFKHHQLRTMKSYFAINHNPDAKDLKQLAQKTGLTKRVLQVWFQNARAKFRRNL) constitute a DNA-binding region (homeobox). Low complexity predominate over residues 353–364 (LTPPGTATTLTD).

Interacts with LDB1 and LDB2.

It is found in the nucleus. In terms of biological role, involved in gonadal development. This is LIM/homeobox protein Lhx9 (LHX9) from Homo sapiens (Human).